The chain runs to 496 residues: Glycerol kinase (496 aa).

Residue Thr-12 coordinates ADP. 3 residues coordinate ATP: Thr-12, Thr-13, and Ser-14. Residue Thr-12 participates in sn-glycerol 3-phosphate binding. Arg-16 lines the ADP pocket. Positions 82, 83, and 134 each coordinate sn-glycerol 3-phosphate. The glycerol site is built by Arg-82, Glu-83, and Tyr-134. His-230 bears the Phosphohistidine; by HPr mark. Position 244 (Asp-244) interacts with sn-glycerol 3-phosphate. Residues Asp-244 and Gln-245 each coordinate glycerol. Thr-266 and Gly-309 together coordinate ADP. ATP is bound by residues Thr-266, Gly-309, Gln-313, and Gly-410. Residues Gly-410 and Asn-414 each contribute to the ADP site.

It belongs to the FGGY kinase family. Homotetramer and homodimer (in equilibrium). Post-translationally, the phosphoenolpyruvate-dependent sugar phosphotransferase system (PTS), including enzyme I, and histidine-containing protein (HPr) are required for the phosphorylation, which leads to the activation of the enzyme.

The enzyme catalyses glycerol + ATP = sn-glycerol 3-phosphate + ADP + H(+). It functions in the pathway polyol metabolism; glycerol degradation via glycerol kinase pathway; sn-glycerol 3-phosphate from glycerol: step 1/1. Its activity is regulated as follows. Activated by phosphorylation and inhibited by fructose 1,6-bisphosphate (FBP). Key enzyme in the regulation of glycerol uptake and metabolism. Catalyzes the phosphorylation of glycerol to yield sn-glycerol 3-phosphate. The chain is Glycerol kinase from Bacillus subtilis (strain 168).